We begin with the raw amino-acid sequence, 99 residues long: Acylphosphatase (99 aa).

The 93-residue stretch at 5-97 (VRQVTVQGRV…RPGERFSTLP (93 aa)) folds into the Acylphosphatase-like domain. Catalysis depends on residues Arg-20 and Asn-38.

It belongs to the acylphosphatase family.

It catalyses the reaction an acyl phosphate + H2O = a carboxylate + phosphate + H(+). The protein is Acylphosphatase (acyP) of Rhodopseudomonas palustris (strain BisB18).